The sequence spans 91 residues: Cytochrome b-c1 complex subunit 6, mitochondrial (91 aa).

The N-terminal 13 residues, 1-13, are a transit peptide targeting the mitochondrion; that stretch reads MGLEDEQKMLTES. Positions 1-30 are disordered; that stretch reads MGLEDEQKMLTESGDPEEEEEEEEELVDPL. Over residues 14 to 27 the composition is skewed to acidic residues; the sequence is GDPEEEEEEEEELV. Cystine bridges form between Cys37–Cys81 and Cys53–Cys67. Lys42 carries the post-translational modification N6-acetyllysine. Lys85 bears the N6-acetyllysine mark.

The protein belongs to the UQCRH/QCR6 family. In terms of assembly, component of the ubiquinol-cytochrome c oxidoreductase (cytochrome b-c1 complex, complex III, CIII), a multisubunit enzyme composed of 11 subunits. The complex is composed of 3 respiratory subunits cytochrome b, cytochrome c1 and Rieske protein UQCRFS1, 2 core protein subunits UQCRC1/QCR1 and UQCRC2/QCR2, and 6 low-molecular weight protein subunits UQCRH/QCR6, UQCRB/QCR7, UQCRQ/QCR8, UQCR10/QCR9, UQCR11/QCR10 and subunit 9, the cleavage product of Rieske protein UQCRFS1. The complex exists as an obligatory dimer and forms supercomplexes (SCs) in the inner mitochondrial membrane with NADH-ubiquinone oxidoreductase (complex I, CI) and cytochrome c oxidase (complex IV, CIV), resulting in different assemblies (supercomplex SCI(1)III(2)IV(1) and megacomplex MCI(2)III(2)IV(2)).

It is found in the mitochondrion inner membrane. In terms of biological role, component of the ubiquinol-cytochrome c oxidoreductase, a multisubunit transmembrane complex that is part of the mitochondrial electron transport chain which drives oxidative phosphorylation. The respiratory chain contains 3 multisubunit complexes succinate dehydrogenase (complex II, CII), ubiquinol-cytochrome c oxidoreductase (cytochrome b-c1 complex, complex III, CIII) and cytochrome c oxidase (complex IV, CIV), that cooperate to transfer electrons derived from NADH and succinate to molecular oxygen, creating an electrochemical gradient over the inner membrane that drives transmembrane transport and the ATP synthase. The cytochrome b-c1 complex catalyzes electron transfer from ubiquinol to cytochrome c, linking this redox reaction to translocation of protons across the mitochondrial inner membrane, with protons being carried across the membrane as hydrogens on the quinol. In the process called Q cycle, 2 protons are consumed from the matrix, 4 protons are released into the intermembrane space and 2 electrons are passed to cytochrome c. The chain is Cytochrome b-c1 complex subunit 6, mitochondrial (UQCRH) from Homo sapiens (Human).